The following is a 452-amino-acid chain: UDP-N-acetylmuramoylalanine--D-glutamate ligase (452 aa).

Residue G119–T125 participates in ATP binding.

It belongs to the MurCDEF family.

It localises to the cytoplasm. The enzyme catalyses UDP-N-acetyl-alpha-D-muramoyl-L-alanine + D-glutamate + ATP = UDP-N-acetyl-alpha-D-muramoyl-L-alanyl-D-glutamate + ADP + phosphate + H(+). Its pathway is cell wall biogenesis; peptidoglycan biosynthesis. Its function is as follows. Cell wall formation. Catalyzes the addition of glutamate to the nucleotide precursor UDP-N-acetylmuramoyl-L-alanine (UMA). The polypeptide is UDP-N-acetylmuramoylalanine--D-glutamate ligase (Streptococcus pyogenes serotype M28 (strain MGAS6180)).